Reading from the N-terminus, the 229-residue chain is MELLLLSNSTLPGKAWLEHALPLIAEQLQGRRSAVFIPFAGVTQTWDDYTAKTAAVLASLGVSVTGIHSVVDPVAAIENAEIVIVGGGNTFQLLKQCRERGLLAPITDVVKRGALYIGWSAGANLACPTIRTTNDMPIVDPQGFDALNLFPLQINPHFTNALPEGHKGETREQRIRELLVVAPELTIIGLPEGNWITVSKGHATLGGPNTTYVFKAGEEAVPLEAGHRF.

Active-site charge relay system residues include serine 120, aspartate 135, and histidine 157.

This sequence belongs to the peptidase S51 family.

The protein localises to the cytoplasm. The enzyme catalyses Dipeptidase E catalyzes the hydrolysis of dipeptides Asp-|-Xaa. It does not act on peptides with N-terminal Glu, Asn or Gln, nor does it cleave isoaspartyl peptides.. Functionally, hydrolyzes dipeptides containing N-terminal aspartate residues. May play a role in allowing the cell to use peptide aspartate to spare carbon otherwise required for the synthesis of the aspartate family of amino acids. This is Peptidase E from Escherichia coli O6:K15:H31 (strain 536 / UPEC).